The primary structure comprises 369 residues: Putative FAD-dependent oxidoreductase LodB (369 aa).

FAD-binding positions include 10 to 14 (GGGPA) and arginine 103.

FAD is required as a cofactor.

The protein resides in the cytoplasm. Its function is as follows. Is required for lysine-epsilon oxidase (LOD) activity in M.mediterranea. May be involved in the generation of the quinonic cofactor of LodA, leading to the active form of LodA containing a tyrosine-derived quinone cofactor. The polypeptide is Putative FAD-dependent oxidoreductase LodB (lodB) (Marinomonas mediterranea (strain ATCC 700492 / JCM 21426 / NBRC 103028 / MMB-1)).